Consider the following 449-residue polypeptide: Omega-amino acid--pyruvate aminotransferase (449 aa).

Residue Trp-60 participates in substrate binding. Residue 119–120 (GS) participates in pyridoxal 5'-phosphate binding. Lys-288 carries the N6-(pyridoxal phosphate)lysine modification. Thr-327 contacts pyridoxal 5'-phosphate. Substrate contacts are provided by Arg-414 and Gln-421.

It belongs to the class-III pyridoxal-phosphate-dependent aminotransferase family. Homotetramer. It depends on pyridoxal 5'-phosphate as a cofactor.

It carries out the reaction 3-oxopropanoate + L-alanine = beta-alanine + pyruvate. In terms of biological role, catalyzes transamination between a variety of omega-amino acids, mono and diamines, and pyruvate. Plays a pivotal role in the metabolism of the omega amino acids. This chain is Omega-amino acid--pyruvate aminotransferase, found in Pseudomonas putida (Arthrobacter siderocapsulatus).